The primary structure comprises 345 residues: Holliday junction branch migration complex subunit RuvB (345 aa).

The segment at 3–187 (LDILQNRNNL…FGFTARLDFY (185 aa)) is large ATPase domain (RuvB-L). Residues Leu-26, Arg-27, Gly-68, Lys-71, Thr-72, Thr-73, 134-136 (EDF), Arg-177, Tyr-187, and Arg-224 each bind ATP. Thr-72 is a binding site for Mg(2+). The segment at 188–259 (SPEELLQVLI…IALKAMDVYE (72 aa)) is small ATPAse domain (RuvB-S). Residues 262-345 (SLGLDRLDRA…EDLSGFELYL (84 aa)) form a head domain (RuvB-H) region. DNA contacts are provided by Arg-317 and Arg-322.

Belongs to the RuvB family. Homohexamer. Forms an RuvA(8)-RuvB(12)-Holliday junction (HJ) complex. HJ DNA is sandwiched between 2 RuvA tetramers; dsDNA enters through RuvA and exits via RuvB. An RuvB hexamer assembles on each DNA strand where it exits the tetramer. Each RuvB hexamer is contacted by two RuvA subunits (via domain III) on 2 adjacent RuvB subunits; this complex drives branch migration. In the full resolvosome a probable DNA-RuvA(4)-RuvB(12)-RuvC(2) complex forms which resolves the HJ.

Its subcellular location is the cytoplasm. The catalysed reaction is ATP + H2O = ADP + phosphate + H(+). Functionally, the RuvA-RuvB-RuvC complex processes Holliday junction (HJ) DNA during genetic recombination and DNA repair, while the RuvA-RuvB complex plays an important role in the rescue of blocked DNA replication forks via replication fork reversal (RFR). RuvA specifically binds to HJ cruciform DNA, conferring on it an open structure. The RuvB hexamer acts as an ATP-dependent pump, pulling dsDNA into and through the RuvAB complex. RuvB forms 2 homohexamers on either side of HJ DNA bound by 1 or 2 RuvA tetramers; 4 subunits per hexamer contact DNA at a time. Coordinated motions by a converter formed by DNA-disengaged RuvB subunits stimulates ATP hydrolysis and nucleotide exchange. Immobilization of the converter enables RuvB to convert the ATP-contained energy into a lever motion, pulling 2 nucleotides of DNA out of the RuvA tetramer per ATP hydrolyzed, thus driving DNA branch migration. The RuvB motors rotate together with the DNA substrate, which together with the progressing nucleotide cycle form the mechanistic basis for DNA recombination by continuous HJ branch migration. Branch migration allows RuvC to scan DNA until it finds its consensus sequence, where it cleaves and resolves cruciform DNA. This chain is Holliday junction branch migration complex subunit RuvB, found in Tropheryma whipplei (strain TW08/27) (Whipple's bacillus).